Here is a 397-residue protein sequence, read N- to C-terminus: ATP phosphoribosyltransferase regulatory subunit (397 aa).

Belongs to the class-II aminoacyl-tRNA synthetase family. HisZ subfamily. As to quaternary structure, heteromultimer composed of HisG and HisZ subunits.

It localises to the cytoplasm. It functions in the pathway amino-acid biosynthesis; L-histidine biosynthesis; L-histidine from 5-phospho-alpha-D-ribose 1-diphosphate: step 1/9. In terms of biological role, required for the first step of histidine biosynthesis. May allow the feedback regulation of ATP phosphoribosyltransferase activity by histidine. This Halalkalibacterium halodurans (strain ATCC BAA-125 / DSM 18197 / FERM 7344 / JCM 9153 / C-125) (Bacillus halodurans) protein is ATP phosphoribosyltransferase regulatory subunit.